The sequence spans 156 residues: Small ribosomal subunit protein uS7 (156 aa).

It belongs to the universal ribosomal protein uS7 family. In terms of assembly, part of the 30S ribosomal subunit. Contacts proteins S9 and S11.

Its function is as follows. One of the primary rRNA binding proteins, it binds directly to 16S rRNA where it nucleates assembly of the head domain of the 30S subunit. Is located at the subunit interface close to the decoding center, probably blocks exit of the E-site tRNA. The polypeptide is Small ribosomal subunit protein uS7 (Anoxybacillus flavithermus (strain DSM 21510 / WK1)).